A 164-amino-acid chain; its full sequence is Endoribonuclease YbeY (164 aa).

The Zn(2+) site is built by His-132, His-136, and His-142.

It belongs to the endoribonuclease YbeY family. It depends on Zn(2+) as a cofactor.

The protein resides in the cytoplasm. Functionally, single strand-specific metallo-endoribonuclease involved in late-stage 70S ribosome quality control and in maturation of the 3' terminus of the 16S rRNA. This chain is Endoribonuclease YbeY, found in Clostridium kluyveri (strain NBRC 12016).